The primary structure comprises 528 residues: Ribonuclease Y (528 aa).

A helical membrane pass occupies residues 15–35; the sequence is SLLVFALICGSIIGYFLYSFF. Residues 217 to 277 form the KH domain; that stretch reads NISVVNIPNE…IRREIAKKTL (61 aa). Positions 343-436 constitute an HD domain; that stretch reads VLKHSLEVAF…VAIADTLSSA (94 aa).

The protein belongs to the RNase Y family.

The protein localises to the cell membrane. Functionally, endoribonuclease that initiates mRNA decay. This Onion yellows phytoplasma (strain OY-M) protein is Ribonuclease Y.